Reading from the N-terminus, the 428-residue chain is Dihydroorotase (428 aa).

Zn(2+)-binding residues include H59 and H61. Substrate is bound by residues 61–63 and N93; that span reads HLR. Residues D151, H178, and H231 each contribute to the Zn(2+) site. Substrate is bound at residue N277. D304 contacts Zn(2+). Residue D304 is part of the active site. Substrate contacts are provided by residues H308 and 322–323; that span reads FG.

The protein belongs to the metallo-dependent hydrolases superfamily. DHOase family. Class I DHOase subfamily. It depends on Zn(2+) as a cofactor.

The enzyme catalyses (S)-dihydroorotate + H2O = N-carbamoyl-L-aspartate + H(+). It functions in the pathway pyrimidine metabolism; UMP biosynthesis via de novo pathway; (S)-dihydroorotate from bicarbonate: step 3/3. Functionally, catalyzes the reversible cyclization of carbamoyl aspartate to dihydroorotate. The chain is Dihydroorotase from Bacillus cereus (strain B4264).